The chain runs to 445 residues: Probable multidrug resistance protein YpnP (445 aa).

12 helical membrane-spanning segments follow: residues 15 to 35, 49 to 69, 95 to 115, 136 to 156, 168 to 188, 194 to 214, 240 to 260, 277 to 297, 314 to 334, 355 to 375, 384 to 404, and 411 to 431; these read LVLF…FQFI, LGAA…ILGL, AFVV…FFLS, LQIQ…STVL, FIAF…SVFR, AAYS…FYVI, IPAG…MSVV, LDSI…SMAG, LGVI…WVFG, LKWI…NGIV, VLVL…ALFS, and GIGL…FLYY.

The protein belongs to the multi antimicrobial extrusion (MATE) (TC 2.A.66.1) family.

It localises to the cell membrane. This Bacillus subtilis (strain 168) protein is Probable multidrug resistance protein YpnP (ypnP).